We begin with the raw amino-acid sequence, 161 residues long: Bacterioferritin (161 aa).

Positions 1–145 (MKGEPKVIER…TQLDLLAKIG (145 aa)) constitute a Ferritin-like diiron domain. Residues Glu-18 and Glu-51 each coordinate Fe cation. Met-52 is a heme b binding site. Fe cation contacts are provided by His-54, Glu-94, Glu-127, and His-130.

This sequence belongs to the bacterioferritin family. Homooligomer of 24 subunits, arranged as 12 dimers, that are packed together to form an approximately spherical molecule with a central cavity, in which large amounts of iron can be deposited. It depends on heme b as a cofactor.

The enzyme catalyses 4 Fe(2+) + O2 + 4 H(+) = 4 Fe(3+) + 2 H2O. The catalysed reaction is Fe(2+)(in) = Fe(2+)(out). Iron-storage protein, whose ferroxidase center binds Fe(2+), oxidizes it using dioxygen to Fe(3+), and participates in the subsequent Fe(3+) oxide mineral core formation within the central cavity of the BFR protein shell. This Brucella melitensis biotype 1 (strain ATCC 23456 / CCUG 17765 / NCTC 10094 / 16M) protein is Bacterioferritin (bfr).